Reading from the N-terminus, the 630-residue chain is MDLTQIQNPSFLKDMSISELEGLSEDIRKFLIEELSQTGGHIAPNLGVVELTIALHKLFDSPKDKFLWDVGHQSYVHKILTGRAKEFGTLRQYQGLCGFPKRCESEHDVWETGHSSTSLSAAMGMALARDLKKTKEYVIPIIGDGALTGGMALEALNHIGHEKTDMIVILNDNEMSIAPNVGALHNVLGRLRTAGKYHWVKDELEYILKKIPAVGGKVAATAEKIKDSLKYLLVSGVFFEELGFTYLGPVDGHDYEKLFETLQYAKKTKGPVLVHVITKKGKGYKPAESDVIGTWHGTGPYKIESGDFVKPKEVAPAWSAVVSETVLKLARTDERIVAITPAMPVGSKLEKFQKEFPDRMIDVGIAEQHATTMAAGMATQGMKPFLAIYSTFLQRAYDQVVHDICRQNLNVFIGIDRSGLVGADGETHQGVFDISFLRHLPNMVLMMPKDENEGQHLVYTAMQYEDGPIALRYARGNGLGVHMDEELKAIPIGSWETLKEGTQAAILTFGTTIPMAMEAAERLEKAGVSVKVVNARFIKPMDEAYLHDLLGKNIPILTIEEACLIGGFGTGVVEFASENGYHSALVERMGIPDRFIEHGSVTKLLEEIGLTTDAVVDRIHTMIPSKQKRA.

Thiamine diphosphate is bound by residues H72 and 113 to 115 (GHS). D144 is a binding site for Mg(2+). Residues 145–146 (GA), N173, Y284, and E367 contribute to the thiamine diphosphate site. Residue N173 coordinates Mg(2+).

This sequence belongs to the transketolase family. DXPS subfamily. In terms of assembly, homodimer. Mg(2+) serves as cofactor. Thiamine diphosphate is required as a cofactor.

The catalysed reaction is D-glyceraldehyde 3-phosphate + pyruvate + H(+) = 1-deoxy-D-xylulose 5-phosphate + CO2. The protein operates within metabolic intermediate biosynthesis; 1-deoxy-D-xylulose 5-phosphate biosynthesis; 1-deoxy-D-xylulose 5-phosphate from D-glyceraldehyde 3-phosphate and pyruvate: step 1/1. Functionally, catalyzes the acyloin condensation reaction between C atoms 2 and 3 of pyruvate and glyceraldehyde 3-phosphate to yield 1-deoxy-D-xylulose-5-phosphate (DXP). This chain is 1-deoxy-D-xylulose-5-phosphate synthase, found in Bacillus cereus (strain ATCC 10987 / NRS 248).